Consider the following 205-residue polypeptide: Outer-membrane lipoprotein LolB (205 aa).

The N-terminal stretch at 1–17 is a signal peptide; that stretch reads MFLRHVIVFSLIALLTG. Cysteine 18 carries the N-palmitoyl cysteine lipid modification. Cysteine 18 carries the S-diacylglycerol cysteine lipid modification.

The protein belongs to the LolB family. As to quaternary structure, monomer.

The protein localises to the cell outer membrane. Its function is as follows. Plays a critical role in the incorporation of lipoproteins in the outer membrane after they are released by the LolA protein. This is Outer-membrane lipoprotein LolB from Pseudomonas savastanoi pv. phaseolicola (strain 1448A / Race 6) (Pseudomonas syringae pv. phaseolicola (strain 1448A / Race 6)).